Here is a 160-residue protein sequence, read N- to C-terminus: Serine-protein kinase RsbW (160 aa).

This sequence belongs to the anti-sigma-factor family.

It carries out the reaction L-seryl-[protein] + ATP = O-phospho-L-seryl-[protein] + ADP + H(+). The enzyme catalyses L-threonyl-[protein] + ATP = O-phospho-L-threonyl-[protein] + ADP + H(+). Negative regulator of sigma-B activity. Phosphorylates and inactivates its specific antagonist protein, RsbV. Upon phosphorylation of RsbV, RsbW is released and binds to sigma-B, thereby blocking its ability to form an RNA polymerase holoenzyme (E-sigma-B). The polypeptide is Serine-protein kinase RsbW (Bacillus velezensis (strain DSM 23117 / BGSC 10A6 / LMG 26770 / FZB42) (Bacillus amyloliquefaciens subsp. plantarum)).